Here is a 393-residue protein sequence, read N- to C-terminus: uncharacterized protein (393 aa).

This is an uncharacterized protein from Methanocaldococcus jannaschii (strain ATCC 43067 / DSM 2661 / JAL-1 / JCM 10045 / NBRC 100440) (Methanococcus jannaschii).